We begin with the raw amino-acid sequence, 258 residues long: Peptidase inhibitor 15 (258 aa).

The signal sequence occupies residues 1-19 (MIAISAVSSALLFSLLCEA). Positions 20–60 (STVVLLNSTDSSPPTNNFTDIEAALKAQLDSADIPKARRKR) are excised as a propeptide. 3 N-linked (GlcNAc...) asparagine glycosylation sites follow: Asn26, Asn36, and Asn124. Residues 71-211 (LDYHNQVRGK…RRAVYLVCNY (141 aa)) enclose the SCP domain.

The protein belongs to the CRISP family. In terms of processing, N-glycosylated. In terms of tissue distribution, weakly expressed. Expressed at low level in prostate, mammary gland, salivary gland and thyroid gland.

It is found in the secreted. In terms of biological role, serine protease inhibitor which displays weak inhibitory activity against trypsin. May play a role in facial patterning during embryonic development. The chain is Peptidase inhibitor 15 (PI15) from Homo sapiens (Human).